Consider the following 138-residue polypeptide: ATP synthase epsilon chain (138 aa).

It belongs to the ATPase epsilon chain family. As to quaternary structure, F-type ATPases have 2 components, CF(1) - the catalytic core - and CF(0) - the membrane proton channel. CF(1) has five subunits: alpha(3), beta(3), gamma(1), delta(1), epsilon(1). CF(0) has three main subunits: a, b and c.

It is found in the cell inner membrane. Functionally, produces ATP from ADP in the presence of a proton gradient across the membrane. This Polaromonas naphthalenivorans (strain CJ2) protein is ATP synthase epsilon chain.